A 409-amino-acid polypeptide reads, in one-letter code: 23S rRNA (uracil(747)-C(5))-methyltransferase (409 aa).

Residues C61, C67, C70, and C137 each coordinate [4Fe-4S] cluster. S-adenosyl-L-methionine-binding residues include Q251, Y277, E298, and D339. The active-site Nucleophile is C365.

It belongs to the class I-like SAM-binding methyltransferase superfamily. RNA M5U methyltransferase family.

The enzyme catalyses uridine(747) in 23S rRNA + S-adenosyl-L-methionine = 5-methyluridine(747) in 23S rRNA + S-adenosyl-L-homocysteine + H(+). Its function is as follows. Catalyzes the formation of 5-methyl-uridine at position equivalent to 747 (m5U747) in 23S rRNA. The protein is 23S rRNA (uracil(747)-C(5))-methyltransferase of Pyrococcus furiosus (strain ATCC 43587 / DSM 3638 / JCM 8422 / Vc1).